The primary structure comprises 209 residues: MADSKEIKRVLLGPLLDNNPIALQVLGICSALAVTTKLETALVMTIAVTLVTAFSSFFISLIRHYIPGSVRIIVQMAIIASLVIVVDQILQAYAYEISKQLSVFVGLIITNCIVMGRAEAYAMKSPPIESFMDGIGNGLGYGVILVLVGFLRELFGSGKLFGITVMESVQNGGWYQPNGLFLLAPSAFFIIGMLIWGLRTLKPAQVEKE.

A run of 5 helical transmembrane segments spans residues 42 to 62, 72 to 92, 103 to 123, 131 to 151, and 178 to 198; these read LVMT…ISLI, IIVQ…ILQA, VFVG…AYAM, FMDG…VGFL, and NGLF…IWGL.

This sequence belongs to the NqrDE/RnfAE family. In terms of assembly, composed of six subunits; NqrA, NqrB, NqrC, NqrD, NqrE and NqrF.

The protein resides in the cell inner membrane. The catalysed reaction is a ubiquinone + n Na(+)(in) + NADH + H(+) = a ubiquinol + n Na(+)(out) + NAD(+). Its function is as follows. NQR complex catalyzes the reduction of ubiquinone-1 to ubiquinol by two successive reactions, coupled with the transport of Na(+) ions from the cytoplasm to the periplasm. NqrA to NqrE are probably involved in the second step, the conversion of ubisemiquinone to ubiquinol. The polypeptide is Na(+)-translocating NADH-quinone reductase subunit D (Photorhabdus laumondii subsp. laumondii (strain DSM 15139 / CIP 105565 / TT01) (Photorhabdus luminescens subsp. laumondii)).